Reading from the N-terminus, the 332-residue chain is CAX-interacting protein 4 (332 aa).

Residues 33 to 59 (GYDPYAPTSKEEPKTTQQKTEDPENSY) are disordered. Residues 41–54 (SKEEPKTTQQKTED) show a composition bias toward basic and acidic residues. The CCHC-type zinc finger occupies 81 to 98 (GSCKKCGRVGHLTFQCRN). Over residues 124–133 (IRRGVGKGEV) the composition is skewed to basic and acidic residues. The tract at residues 124–332 (IRRGVGKGEV…RKRHHRKERE (209 aa)) is disordered. The span at 134–153 (EEVSSEEEEESESSDSDVDS) shows a compositional bias: acidic residues. Residues 154-163 (EMERIIAERF) are compositionally biased toward basic and acidic residues. Basic residues-rich tracts occupy residues 198–214 (RKRRRRSMKKRSSHKRR) and 227–236 (SKRRKERRGR). Over residues 241 to 250 (DDSDESEDED) the composition is skewed to acidic residues. 2 stretches are compositionally biased toward basic residues: residues 254-269 (VKRKSRKEKRRRRSRR) and 314-332 (SSKRSEKKSRKRHHRKERE).

In terms of assembly, interacts with CAX1. As to expression, expressed in leaves, stems and roots, and at lower levels in flowers.

Its subcellular location is the nucleus. In terms of biological role, may regulate CAX1 cation transporter. The polypeptide is CAX-interacting protein 4 (CXIP4) (Arabidopsis thaliana (Mouse-ear cress)).